A 354-amino-acid chain; its full sequence is UDP-N-acetylglucosamine--N-acetylmuramyl-(pentapeptide) pyrophosphoryl-undecaprenol N-acetylglucosamine transferase (354 aa).

UDP-N-acetyl-alpha-D-glucosamine contacts are provided by residues 11 to 13 (TAG), Arg-164, Ser-194, and Gln-289.

This sequence belongs to the glycosyltransferase 28 family. MurG subfamily.

The protein resides in the cell membrane. The catalysed reaction is di-trans,octa-cis-undecaprenyl diphospho-N-acetyl-alpha-D-muramoyl-L-alanyl-D-glutamyl-meso-2,6-diaminopimeloyl-D-alanyl-D-alanine + UDP-N-acetyl-alpha-D-glucosamine = di-trans,octa-cis-undecaprenyl diphospho-[N-acetyl-alpha-D-glucosaminyl-(1-&gt;4)]-N-acetyl-alpha-D-muramoyl-L-alanyl-D-glutamyl-meso-2,6-diaminopimeloyl-D-alanyl-D-alanine + UDP + H(+). Its pathway is cell wall biogenesis; peptidoglycan biosynthesis. Cell wall formation. Catalyzes the transfer of a GlcNAc subunit on undecaprenyl-pyrophosphoryl-MurNAc-pentapeptide (lipid intermediate I) to form undecaprenyl-pyrophosphoryl-MurNAc-(pentapeptide)GlcNAc (lipid intermediate II). In Clostridium botulinum (strain 657 / Type Ba4), this protein is UDP-N-acetylglucosamine--N-acetylmuramyl-(pentapeptide) pyrophosphoryl-undecaprenol N-acetylglucosamine transferase.